The sequence spans 413 residues: Unsaturated 3S-rhamnoglycuronyl hydrolase (413 aa).

Residues 1 to 21 form the signal peptide; it reads MNHTKLKLSAVALTLALGLSA. Residue Cys-22 is the site of N-palmitoyl cysteine attachment. Cys-22 carries S-diacylglycerol cysteine lipidation. The active-site Proton donor is Asp-203.

The protein belongs to the glycosyl hydrolase 105 family.

The protein resides in the cell membrane. Its function is as follows. Glucuronyl hydrolase involved in ulvan degradation. Ulvan is the main polysaccharide component of the Ulvales (green seaweed) cell wall. It is composed of disaccharide building blocks comprising 3-sulfated rhamnose (Rha3S) linked to D-glucuronic acid (GlcA), L-iduronic acid (IduA), or D-xylose (Xyl). Unsaturated 3S-rhamnoglycuronyl hydrolase works together with ulvan lyases to fully degrade the ulvan polymer, catalyzing specifically the cleavage of the unsaturated 4-deoxy-L-threo-hex-4-enopyranosiduronic acid (deltaUA) of the deltaUA-oligosaccharides deltaUA-Rha3S, deltaUA-Rha3S-IduA-Rha3S and deltaUA-Rha3S-Xyl-Rha3S, the end products of the ulvan lyase reaction. The sequence is that of Unsaturated 3S-rhamnoglycuronyl hydrolase from Alteromonas sp. (strain LOR).